Consider the following 263-residue polypeptide: 3-methyl-2-oxobutanoate hydroxymethyltransferase 2 (263 aa).

Mg(2+) contacts are provided by aspartate 45 and aspartate 84. 3-methyl-2-oxobutanoate-binding positions include aspartate 45–serine 46, aspartate 84, and lysine 112. Glutamate 114 serves as a coordination point for Mg(2+). Glutamate 181 serves as the catalytic Proton acceptor.

Belongs to the PanB family. In terms of assembly, homodecamer; pentamer of dimers. Mg(2+) is required as a cofactor.

It localises to the cytoplasm. The enzyme catalyses 3-methyl-2-oxobutanoate + (6R)-5,10-methylene-5,6,7,8-tetrahydrofolate + H2O = 2-dehydropantoate + (6S)-5,6,7,8-tetrahydrofolate. It functions in the pathway cofactor biosynthesis; (R)-pantothenate biosynthesis; (R)-pantoate from 3-methyl-2-oxobutanoate: step 1/2. In terms of biological role, catalyzes the reversible reaction in which hydroxymethyl group from 5,10-methylenetetrahydrofolate is transferred onto alpha-ketoisovalerate to form ketopantoate. The protein is 3-methyl-2-oxobutanoate hydroxymethyltransferase 2 of Aliivibrio fischeri (strain ATCC 700601 / ES114) (Vibrio fischeri).